Consider the following 183-residue polypeptide: dCTP deaminase (183 aa).

Residues 97–102 (RSSFAR) and aspartate 113 each bind dCTP. The active-site Proton donor/acceptor is the glutamate 123. 2 residues coordinate dCTP: tyrosine 155 and glutamine 162.

It belongs to the dCTP deaminase family. Homotrimer.

It catalyses the reaction dCTP + H2O + H(+) = dUTP + NH4(+). The protein operates within pyrimidine metabolism; dUMP biosynthesis; dUMP from dCTP (dUTP route): step 1/2. In terms of biological role, catalyzes the deamination of dCTP to dUTP. The chain is dCTP deaminase from Sulfurisphaera tokodaii (strain DSM 16993 / JCM 10545 / NBRC 100140 / 7) (Sulfolobus tokodaii).